The chain runs to 118 residues: Large ribosomal subunit protein uL18 (118 aa).

The protein belongs to the universal ribosomal protein uL18 family. In terms of assembly, part of the 50S ribosomal subunit; part of the 5S rRNA/L5/L18/L25 subcomplex. Contacts the 5S and 23S rRNAs.

Functionally, this is one of the proteins that bind and probably mediate the attachment of the 5S RNA into the large ribosomal subunit, where it forms part of the central protuberance. This chain is Large ribosomal subunit protein uL18, found in Dichelobacter nodosus (strain VCS1703A).